Here is a 517-residue protein sequence, read N- to C-terminus: MAKERCQKRSFQDTLEDIKNRMKEKRNKNLAGIGKRKSFIVAPGQVPTNTATLLRYYQDNNRLLVLALENEKSKVREAQDVILQLRKECYYLTCQLYALKEKLTSRQSEETTQNWKGRPSDVVSSIDNTTRDLSGKSLQQIAVEETDCPYQTTEPSPAVTPETQGCDFDSGKVESTDEVLPRTISIRRHLRKDFSNISHSTTLEDCKASPRVAQSLEVKGSRCREVTVTLHRLENVCLWNKDQISLCSRLINPAKITETEVILSSKPEQIESKHKRARKRRAEQRRTKQRCKSKSSLRSKGNKNKDKQGLPPTTLDGGIGSCDAYDFNLKGTVHPTPFRQKMNNGCNKETDSSNSEVSDLECSTSEDESDDLYLPPSKRLRDYRESERAVTRPRSKRGLQYPDGKERKEVLPSTAPTGIPPETQESPRCSLKDVTNILQCPRVKIRKPSLPPKRREDSPAVALTKRRCSTIKSYKEPTLASKLRRGDPFTDLCFLNSPIFKQKRGMRCPKRRTKQTQ.

Positions 1-89 (MAKERCQKRS…DVILQLRKEC (89 aa)) form a coiled coil. The necessary for interaction with PPP2CA and PPP2R1A stretch occupies residues 1–176 (MAKERCQKRS…DFDSGKVEST (176 aa)). 4 disordered regions span residues 107–136 (QSEETTQNWKGRPSDVVSSIDNTTRDLSGK), 149–173 (PYQTTEPSPAVTPETQGCDFDSGKV), 267–317 (PEQI…TLDG), and 334–427 (HPTP…QESP). Residues 268–291 (EQIESKHKRARKRRAEQRRTKQRC) adopt a coiled-coil conformation. Positions 273–302 (KHKRARKRRAEQRRTKQRCKSKSSLRSKGN) are enriched in basic residues. Residues 341–363 (KMNNGCNKETDSSNSEVSDLECS) show a composition bias toward polar residues. Basic and acidic residues predominate over residues 379-390 (RLRDYRESERAV). At Ser426 the chain carries Phosphoserine. The PXVXL/I motif motif lies at 441 to 445 (PRVKI). Positions 447–455 (KPSLPPKRR) match the D-box motif. Ser497 carries the phosphoserine; by NEK2 modification.

It belongs to the shugoshin family. In terms of assembly, interacts with PPP2CA (or PPP2CB), PPP2R1B, PPP2R5A, PPP2R5B, PPP2R5C, PPP2R5D, PPP2R5E, SET, LRRC59, RBM10 (or RBM5), RPL10A, RPL28, RPL7, RPL7A and RPLP1. Interaction with protein phosphatase 2A occurs most probably through direct binding to the regulatory B56 subunits: PPP2R1B, PPP2R5A, PPP2R5B, PPP2R5C, PPP2R5D, PPP2R5E. Interacts with PPP2R1A and NEK2. Interacts with CDCA8. In terms of processing, ubiquitinated and degraded during mitotic exit by APC/C-Cdh1. Post-translationally, phosphorylation by NEK2 is essential for chromosome congression in mitosis and for the proper attachment of spindle microtubule to the kinetochore. Phosphorylated by PLK1 and AUKRB. As to expression, ubiquitously expressed in proliferating cells. Moderately expressed in the oocytes.

The protein resides in the nucleus. It localises to the chromosome. It is found in the centromere. Its subcellular location is the kinetochore. The protein localises to the cytoplasm. The protein resides in the cytoskeleton. It localises to the spindle pole. It is found in the microtubule organizing center. Its subcellular location is the centrosome. The protein localises to the nucleus speckle. Functionally, plays a central role in chromosome cohesion during mitosis by preventing premature dissociation of cohesin complex from centromeres after prophase, when most of cohesin complex dissociates from chromosomes arms. May act by preventing phosphorylation of the STAG2 subunit of cohesin complex at the centromere, ensuring cohesin persistence at centromere until cohesin cleavage by ESPL1/separase at anaphase. Essential for proper chromosome segregation during mitosis and this function requires interaction with PPP2R1A. Its phosphorylated form is necessary for chromosome congression and for the proper attachment of spindle microtubule to the kinetochore. Necessary for kinetochore localization of PLK1 and CENPF. May play a role in the tension sensing mechanism of the spindle-assembly checkpoint by regulating PLK1 kinetochore affinity. Involved in centromeric enrichment of AUKRB in prometaphase. The protein is Shugoshin 1 of Mus musculus (Mouse).